The primary structure comprises 447 residues: ATP-dependent protease ATPase subunit HslU (447 aa).

Residues Ile-18, 60-65, Asp-260, Glu-325, and Arg-397 each bind ATP; that span reads GVGKTE.

This sequence belongs to the ClpX chaperone family. HslU subfamily. In terms of assembly, a double ring-shaped homohexamer of HslV is capped on each side by a ring-shaped HslU homohexamer. The assembly of the HslU/HslV complex is dependent on binding of ATP.

Its subcellular location is the cytoplasm. Functionally, ATPase subunit of a proteasome-like degradation complex; this subunit has chaperone activity. The binding of ATP and its subsequent hydrolysis by HslU are essential for unfolding of protein substrates subsequently hydrolyzed by HslV. HslU recognizes the N-terminal part of its protein substrates and unfolds these before they are guided to HslV for hydrolysis. This is ATP-dependent protease ATPase subunit HslU from Paraburkholderia phymatum (strain DSM 17167 / CIP 108236 / LMG 21445 / STM815) (Burkholderia phymatum).